Reading from the N-terminus, the 190-residue chain is Crossover junction endodeoxyribonuclease RuvC (190 aa).

Catalysis depends on residues Asp-8, Glu-67, and Asp-139. Mg(2+) is bound by residues Asp-8, Glu-67, and Asp-139.

The protein belongs to the RuvC family. As to quaternary structure, homodimer which binds Holliday junction (HJ) DNA. The HJ becomes 2-fold symmetrical on binding to RuvC with unstacked arms; it has a different conformation from HJ DNA in complex with RuvA. In the full resolvosome a probable DNA-RuvA(4)-RuvB(12)-RuvC(2) complex forms which resolves the HJ. It depends on Mg(2+) as a cofactor.

The protein localises to the cytoplasm. It catalyses the reaction Endonucleolytic cleavage at a junction such as a reciprocal single-stranded crossover between two homologous DNA duplexes (Holliday junction).. In terms of biological role, the RuvA-RuvB-RuvC complex processes Holliday junction (HJ) DNA during genetic recombination and DNA repair. Endonuclease that resolves HJ intermediates. Cleaves cruciform DNA by making single-stranded nicks across the HJ at symmetrical positions within the homologous arms, yielding a 5'-phosphate and a 3'-hydroxyl group; requires a central core of homology in the junction. The consensus cleavage sequence is 5'-(A/T)TT(C/G)-3'. Cleavage occurs on the 3'-side of the TT dinucleotide at the point of strand exchange. HJ branch migration catalyzed by RuvA-RuvB allows RuvC to scan DNA until it finds its consensus sequence, where it cleaves and resolves the cruciform DNA. The sequence is that of Crossover junction endodeoxyribonuclease RuvC from Haemophilus influenzae (strain ATCC 51907 / DSM 11121 / KW20 / Rd).